The chain runs to 300 residues: 33 kDa chaperonin (300 aa).

Intrachain disulfides connect Cys235–Cys237 and Cys269–Cys272.

It belongs to the HSP33 family. Under oxidizing conditions two disulfide bonds are formed involving the reactive cysteines. Under reducing conditions zinc is bound to the reactive cysteines and the protein is inactive.

The protein localises to the cytoplasm. Redox regulated molecular chaperone. Protects both thermally unfolding and oxidatively damaged proteins from irreversible aggregation. Plays an important role in the bacterial defense system toward oxidative stress. This is 33 kDa chaperonin from Pseudomonas syringae pv. tomato (strain ATCC BAA-871 / DC3000).